The chain runs to 293 residues: MNEQTYLLASAVEPVAAENMSWTQTLVLSVVQGLTEFLPISSSGHLRIISELFWGADAGASFTAVVQLGTEAAVLVYFAREIWQILTGWFAGVFNKDRRGRDYKMGWMIIVATIPVVVLGVLGKDLIRDALRNMWITATVLVLFSFVFILAEKVGKKDRGYDELNMRDALVMGFAQCLALIPGVSRSGGTISAGLFMGLNREVAAKFSFLLAIPAVLGSGLYSLPDAFDPSTGQAASGLQLTIGTLVAFLVGYASIAWLMKFVANHSFSWFAAYRIPAGLLVMLLLWLGYLNP.

The next 5 membrane-spanning stretches (helical) occupy residues Trp-107–Ile-127, Met-134–Val-154, Phe-207–Ala-227, Ile-243–Val-263, and Phe-268–Leu-288.

It belongs to the UppP family.

Its subcellular location is the cell membrane. It carries out the reaction di-trans,octa-cis-undecaprenyl diphosphate + H2O = di-trans,octa-cis-undecaprenyl phosphate + phosphate + H(+). Its function is as follows. Catalyzes the dephosphorylation of undecaprenyl diphosphate (UPP). Confers resistance to bacitracin. This Corynebacterium efficiens (strain DSM 44549 / YS-314 / AJ 12310 / JCM 11189 / NBRC 100395) protein is Undecaprenyl-diphosphatase.